Here is a 456-residue protein sequence, read N- to C-terminus: Probable glycine dehydrogenase (decarboxylating) subunit 1 (456 aa).

This sequence belongs to the GcvP family. N-terminal subunit subfamily. The glycine cleavage system is composed of four proteins: P, T, L and H. In this organism, the P 'protein' is a heterodimer of two subunits.

It catalyses the reaction N(6)-[(R)-lipoyl]-L-lysyl-[glycine-cleavage complex H protein] + glycine + H(+) = N(6)-[(R)-S(8)-aminomethyldihydrolipoyl]-L-lysyl-[glycine-cleavage complex H protein] + CO2. Functionally, the glycine cleavage system catalyzes the degradation of glycine. The P protein binds the alpha-amino group of glycine through its pyridoxal phosphate cofactor; CO(2) is released and the remaining methylamine moiety is then transferred to the lipoamide cofactor of the H protein. This chain is Probable glycine dehydrogenase (decarboxylating) subunit 1, found in Legionella pneumophila (strain Paris).